An 818-amino-acid chain; its full sequence is Hillarin (818 aa).

Residues 9–76 form the LIM zinc-binding domain; it reads STCLRCSETV…SSHVPKSGPG (68 aa). Positions 97-141 are disordered; the sequence is FVNEQIRGTRSEVDGGPLGGSRQSTPNGYGSREISSPSQNDSDYK. The span at 117-137 shows a compositional bias: polar residues; it reads SRQSTPNGYGSREISSPSQND. The stretch at 216–272 forms a coiled coil; it reads QDEWERELQRLTHKFEKELATSRRSRDEANILTMRHEQQKEDLEKNMTLRRSKKKES.

This sequence belongs to the transglutaminase-like superfamily. As to quaternary structure, interacts with pnut. Localizes to the neuropil of the embryonic central nervous system (at protein level). Also detected in third instar larval brain (at protein level).

It is found in the cytoplasm. It localises to the cell cortex. Its subcellular location is the cleavage furrow. Its function is as follows. May act as a modulator of septin function during cytokinesis in the developing nervous system. This Drosophila melanogaster (Fruit fly) protein is Hillarin.